Here is a 451-residue protein sequence, read N- to C-terminus: Cytochrome c biogenesis protein CcsB (451 aa).

The next 3 helical transmembrane spans lie at Leu30–Ile50, Thr89–Thr109, and Ile175–Ala195.

This sequence belongs to the Ccs1/CcsB family. May interact with CcsA.

It is found in the cellular thylakoid membrane. Its function is as follows. Required during biogenesis of c-type cytochromes (cytochrome c6 and cytochrome f) at the step of heme attachment. The sequence is that of Cytochrome c biogenesis protein CcsB from Crocosphaera subtropica (strain ATCC 51142 / BH68) (Cyanothece sp. (strain ATCC 51142)).